A 436-amino-acid chain; its full sequence is UPF0229 protein Meso_0256 (436 aa).

Positions 53-110 (PMPARGTSEPTFRPDRSSGERGYILPGNKEFAPGDRLPKPGASGGEGGTGAGRGGSDD) are disordered. Residues 94–106 (ASGGEGGTGAGRG) are compositionally biased toward gly residues.

This sequence belongs to the UPF0229 family.

The protein is UPF0229 protein Meso_0256 of Chelativorans sp. (strain BNC1).